Consider the following 87-residue polypeptide: U14-lycotoxin-Ls1a (87 aa).

The N-terminal stretch at 1–20 (MNSKVFAVLLLLALSTCVLS) is a signal peptide. In terms of domain architecture, WAP spans 21–66 (EKYCPTPRNTSCKKMNIRNNCCRDSDCTSNAFCCAEPCGNFCHKAS). Intrachain disulfides connect cysteine 24–cysteine 54, cysteine 32–cysteine 58, cysteine 41–cysteine 53, cysteine 42–cysteine 80, and cysteine 47–cysteine 62.

It belongs to the venom protein 11 family. 01 (wap-1) subfamily. Post-translationally, contains 5 disulfide bonds. As to expression, expressed by the venom gland.

It is found in the secreted. Functionally, has antibacterial activity. The protein is U14-lycotoxin-Ls1a of Lycosa singoriensis (Wolf spider).